The primary structure comprises 414 residues: WD repeat-containing protein jip5 (414 aa).

WD repeat units follow at residues Pro-9 to Asp-48, Arg-73 to Lys-112, Ala-118 to Ser-159, Val-222 to Glu-263, and Asp-319 to Asp-356. The disordered stretch occupies residues Arg-39–Ile-65. The disordered stretch occupies residues Ser-352 to Asp-414. Acidic residues predominate over residues Asp-369 to Asp-383.

This sequence belongs to the WD repeat WDR55 family.

It is found in the nucleus. Its subcellular location is the nucleolus. This Neosartorya fischeri (strain ATCC 1020 / DSM 3700 / CBS 544.65 / FGSC A1164 / JCM 1740 / NRRL 181 / WB 181) (Aspergillus fischerianus) protein is WD repeat-containing protein jip5 (jip5).